Reading from the N-terminus, the 251-residue chain is Hydroxyacylglutathione hydrolase (251 aa).

Residues histidine 53, histidine 55, aspartate 57, histidine 58, histidine 110, aspartate 127, and histidine 165 each contribute to the Zn(2+) site.

It belongs to the metallo-beta-lactamase superfamily. Glyoxalase II family. Monomer. It depends on Zn(2+) as a cofactor.

It catalyses the reaction an S-(2-hydroxyacyl)glutathione + H2O = a 2-hydroxy carboxylate + glutathione + H(+). The protein operates within secondary metabolite metabolism; methylglyoxal degradation; (R)-lactate from methylglyoxal: step 2/2. Functionally, thiolesterase that catalyzes the hydrolysis of S-D-lactoyl-glutathione to form glutathione and D-lactic acid. The polypeptide is Hydroxyacylglutathione hydrolase (Blochmanniella pennsylvanica (strain BPEN)).